The following is a 262-amino-acid chain: Versicolorin reductase 1 (262 aa).

NADP(+) contacts are provided by Ile-21, Asp-67, Asn-94, and Arg-127. Catalysis depends on proton donor residues Ser-143 and Ser-144. NADP(+) contacts are provided by Tyr-158, Lys-162, Ile-191, and Thr-193. Tyr-158 functions as the Proton acceptor in the catalytic mechanism. Lys-162 serves as the catalytic Lowers pKa of active site Tyr.

Belongs to the short-chain dehydrogenases/reductases (SDR) family.

Its subcellular location is the cytoplasm. The protein resides in the cytosol. It carries out the reaction (4S,8R)-2,13,16,20-tetrahydroxy-7,9-dioxapentacyclo[10.8.0.0(3,10).0(4,8).0(14,19)]icosa-1(12),2,5,10,13,16,19-heptaen-18-one + NADPH + H(+) = (4S,8R,16R)-2,13,16,20-tetrahydroxy-7,9-dioxapentacyclo[10.8.0.0(3,10).0(4,8).0(14,19)]icosa-1(12),2,5,10,13,19-hexaen-18-one + NADP(+). The protein operates within mycotoxin biosynthesis; aflatoxin biosynthesis. In terms of biological role, cytochrome P450 monooxygenase; part of the gene cluster that mediates the biosynthesis of aflatoxins, a group of polyketide-derived furanocoumarins, and part of the most toxic and carcinogenic compounds among the known mycotoxins. The four major aflatoxins produced by A.parasiticus are aflatoxin B1 (AFB1), aflatoxin B2 (AFB2), aflatoxin G1 (AFG1) and aflatoxin G2 (AFG2). Within the aflatoxin pathway, with the cytochrome P450 monooxygenase aflN, the versicolorin reductase aflM, is involved in conversion of VERA to demethylsterigmatocystin (DMST). The biosynthesis of aflatoxins begins with the norsolorinic acid synthase aflC that combines a hexanoyl starter unit produced by the fatty acid synthase aflA/aflB and 7 malonyl-CoA extender units to synthesize the precursor NOR. The second step is the conversion of NOR to averantin and requires the norsolorinic acid ketoreductase aflD, which catalyzes the dehydration of norsolorinic acid to form (1'S)-averantin. The norsolorinic acid reductases aflE and aflF may also play a role in the conversion of NOR to AVN. The cytochrome P450 monooxygenase aflG then catalyzes the hydroxylation of AVN to 5'hydroxyaverantin (HAVN). The next step is performed by the 5'-hydroxyaverantin dehydrogenase aflH that transforms HAVN to 5'-oxoaverantin (OAVN) which is further converted to averufin (AVF) by aflK that plays a dual role in the pathway, as a 5'-oxoaverantin cyclase that mediates conversion of 5'-oxoaverantin, as well as a versicolorin B synthase in a later step in the pathway. The averufin oxidase aflI catalyzes the conversion of AVF to versiconal hemiacetal acetate (VHA). VHA is then the substrate for the versiconal hemiacetal acetate esterase aflJ to yield versiconal (VAL). Versicolorin B synthase aflK then converts VAL to versicolorin B (VERB) by closing the bisfuran ring of aflatoxin which is required for DNA-binding, thus giving to aflatoxin its activity as a mutagen. Then, the activity of the versicolorin B desaturase aflL leads to versicolorin A (VERA). A branch point starts from VERB since it can also be converted to dihydrodemethylsterigmatocystin (DMDHST), probably also by aflL, VERA being a precursor for aflatoxins B1 and G1, and DMDHST for aflatoxins B2 and G2. Next, the versicolorin reductase aflM and the cytochrome P450 monooxygenase aflN are involved in conversion of VERA to demethylsterigmatocystin (DMST). AflX and aflY seem also involved in this step, through probable aflX-mediated epoxide ring-opening step following versicolorin A oxidation and aflY-mediated Baeyer-Villiger oxidation required for the formation of the xanthone ring. The methyltransferase aflO then leads to the modification of DMST to sterigmatocystin (ST), and of DMDHST to dihydrosterigmatocystin (DHST). Both ST and DHST are then substrates of the O-methyltransferase aflP to yield O-methylsterigmatocystin (OMST) and dihydro-O-methylsterigmatocystin (DHOMST), respectively. Finally OMST is converted to aflatoxins B1 and G1, and DHOMST to aflatoxins B2 and G2, via the action of several enzymes including O-methylsterigmatocystin oxidoreductase aflQ, the cytochrome P450 monooxygenase aflU, but also the NADH-dependent flavin oxidoreductase nadA which is specifically required for the synthesis of AFG1. This is Versicolorin reductase 1 from Aspergillus parasiticus (strain ATCC 56775 / NRRL 5862 / SRRC 143 / SU-1).